The primary structure comprises 29 residues: Cytochrome b6-f complex subunit 8 (29 aa).

Residues 3–23 (LITITWASVMVAFTFSLSLVV) traverse the membrane as a helical segment.

This sequence belongs to the PetN family. In terms of assembly, the 4 large subunits of the cytochrome b6-f complex are cytochrome b6, subunit IV (17 kDa polypeptide, PetD), cytochrome f and the Rieske protein, while the 4 small subunits are PetG, PetL, PetM and PetN. The complex functions as a dimer.

The protein resides in the plastid. Its subcellular location is the chloroplast thylakoid membrane. In terms of biological role, component of the cytochrome b6-f complex, which mediates electron transfer between photosystem II (PSII) and photosystem I (PSI), cyclic electron flow around PSI, and state transitions. The protein is Cytochrome b6-f complex subunit 8 of Chaetosphaeridium globosum (Charophycean green alga).